Reading from the N-terminus, the 205-residue chain is Small ribosomal subunit protein uS5 (205 aa).

Residues 1–25 are disordered; sequence MSGAQRGQRGGERRGGRDDRRGQGA. Residues 9–24 show a composition bias toward basic and acidic residues; sequence RGGERRGGRDDRRGQG. An S5 DRBM domain is found at 30–93; that stretch reads YIERVVAINR…EEAKKHFFRV (64 aa).

It belongs to the universal ribosomal protein uS5 family. Part of the 30S ribosomal subunit. Contacts proteins S4 and S8.

Functionally, with S4 and S12 plays an important role in translational accuracy. Its function is as follows. Located at the back of the 30S subunit body where it stabilizes the conformation of the head with respect to the body. The polypeptide is Small ribosomal subunit protein uS5 (Nocardioides sp. (strain ATCC BAA-499 / JS614)).